A 180-amino-acid chain; its full sequence is Orotate phosphoribosyltransferase (180 aa).

5-phospho-alpha-D-ribose 1-diphosphate contacts are provided by residues R95, K96, K99, and 121–129 (EDVTTTGGS). Positions 125 and 153 each coordinate orotate.

This sequence belongs to the purine/pyrimidine phosphoribosyltransferase family. PyrE subfamily. In terms of assembly, homodimer. The cofactor is Mg(2+).

It catalyses the reaction orotidine 5'-phosphate + diphosphate = orotate + 5-phospho-alpha-D-ribose 1-diphosphate. Its pathway is pyrimidine metabolism; UMP biosynthesis via de novo pathway; UMP from orotate: step 1/2. In terms of biological role, catalyzes the transfer of a ribosyl phosphate group from 5-phosphoribose 1-diphosphate to orotate, leading to the formation of orotidine monophosphate (OMP). The polypeptide is Orotate phosphoribosyltransferase (Methanothermobacter thermautotrophicus (strain ATCC 29096 / DSM 1053 / JCM 10044 / NBRC 100330 / Delta H) (Methanobacterium thermoautotrophicum)).